Reading from the N-terminus, the 178-residue chain is Large ribosomal subunit protein bL25 (178 aa).

It belongs to the bacterial ribosomal protein bL25 family. CTC subfamily. As to quaternary structure, part of the 50S ribosomal subunit; part of the 5S rRNA/L5/L18/L25 subcomplex. Contacts the 5S rRNA. Binds to the 5S rRNA independently of L5 and L18.

Its function is as follows. This is one of the proteins that binds to the 5S RNA in the ribosome where it forms part of the central protuberance. The sequence is that of Large ribosomal subunit protein bL25 from Helicobacter pylori (strain J99 / ATCC 700824) (Campylobacter pylori J99).